The following is a 240-amino-acid chain: 2,3,4,5-tetrahydropyridine-2,6-dicarboxylate N-acetyltransferase (240 aa).

The protein belongs to the transferase hexapeptide repeat family. DapH subfamily.

The enzyme catalyses (S)-2,3,4,5-tetrahydrodipicolinate + acetyl-CoA + H2O = L-2-acetamido-6-oxoheptanedioate + CoA. The protein operates within amino-acid biosynthesis; L-lysine biosynthesis via DAP pathway; LL-2,6-diaminopimelate from (S)-tetrahydrodipicolinate (acetylase route): step 1/3. In terms of biological role, catalyzes the transfer of an acetyl group from acetyl-CoA to tetrahydrodipicolinate. This is 2,3,4,5-tetrahydropyridine-2,6-dicarboxylate N-acetyltransferase from Bacillus thuringiensis (strain Al Hakam).